A 1097-amino-acid chain; its full sequence is Transmembrane protein 132D (1097 aa).

An N-terminal signal peptide occupies residues 1–30; sequence MCPSEMGTLWYLWSPVLISLAALFSKVTEG. Over 31–913 the chain is Extracellular; the sequence is RGILESIQRF…PDQAAKGLSD (883 aa). Residues 233-245 are compositionally biased toward basic and acidic residues; it reads DERGDCAKEDSRK. 2 disordered regions span residues 233-263 and 885-906; these read DERGDCAKEDSRKSGGAPAGHNDVDESSPPL and SFPDQVDLPGSNVGTEEHDPDQ. Residues 914–934 traverse the membrane as a helical segment; that stretch reads LEIGMYALLGVFCLAILVFLI. At 935–1097 the chain is on the cytoplasmic side; sequence NCVTFALKYR…SCMERLHEHV (163 aa). Residues 1021–1042 form a disordered region; that stretch reads MLTDDKEQKSEPPTSPTSKRKR.

The protein belongs to the TMEM132 family. As to expression, expressed in mature oligodendrocytes in the brain.

The protein localises to the membrane. Functionally, regulates neuronal morphology via inhibition of the WAVE regulatory complex (WCR), a complex that controls F-actin cytoskeletal dynamics. This Rattus norvegicus (Rat) protein is Transmembrane protein 132D (Tmem132d).